The following is a 431-amino-acid chain: Serine/threonine-protein kinase Sgk1 (431 aa).

The tract at residues 58-93 (LNLTPPQDPELMNSNPSPPPSPSQQINLGPSSNPSA) is disordered. The span at 81–93 (QQINLGPSSNPSA) shows a compositional bias: polar residues. Residues 98–355 (FHFLKVIGKG…FTEIKNHVFF (258 aa)) enclose the Protein kinase domain. ATP-binding positions include 104–112 (IGKGSFGKV) and Lys127. Asp222 acts as the Proton acceptor in catalysis. An AGC-kinase C-terminal domain is found at 356-431 (SPINWDDLNA…SYAPSMDSYL (76 aa)).

The protein belongs to the protein kinase superfamily. AGC Ser/Thr protein kinase family.

The protein resides in the cytoplasm. It localises to the nucleus. It is found in the endoplasmic reticulum. The enzyme catalyses L-seryl-[protein] + ATP = O-phospho-L-seryl-[protein] + ADP + H(+). The catalysed reaction is L-threonyl-[protein] + ATP = O-phospho-L-threonyl-[protein] + ADP + H(+). In terms of biological role, protein kinase that may play an important role in cellular stress response. May be involved in the regulation of processes such as cell survival, neuronal excitability and renal sodium excretion. The polypeptide is Serine/threonine-protein kinase Sgk1 (sgk1) (Fundulus heteroclitus (Killifish)).